We begin with the raw amino-acid sequence, 96 residues long: Secreted RxLR effector protein 123 (96 aa).

Positions 1–22 (MVGAYYVGIALLVAGGSQTAAG) are cleaved as a signal peptide. The short motif at 49-70 (RFLRKSRNPKDNLMLSEANEER) is the RxLR-dEER element. The tract at residues 57-96 (PKDNLMLSEANEERTPSSPSNSLTEFIVSEPITTNVMRTE) is disordered. Polar residues predominate over residues 87–96 (PITTNVMRTE).

Belongs to the RxLR effector family.

The protein resides in the secreted. The protein localises to the host nucleus. It is found in the host cytoplasm. Its function is as follows. Secreted effector that dos not suppress the host cell death induced by cell death-inducing proteins. This is Secreted RxLR effector protein 123 from Plasmopara viticola (Downy mildew of grapevine).